A 290-amino-acid chain; its full sequence is Probable porphobilinogen deaminase (290 aa).

The residue at position 230 (Cys230) is an S-(dipyrrolylmethanemethyl)cysteine.

It belongs to the HMBS family. Requires dipyrromethane as cofactor.

The enzyme catalyses 4 porphobilinogen + H2O = hydroxymethylbilane + 4 NH4(+). It participates in porphyrin-containing compound metabolism; protoporphyrin-IX biosynthesis; coproporphyrinogen-III from 5-aminolevulinate: step 2/4. In terms of biological role, tetrapolymerization of the monopyrrole PBG into the hydroxymethylbilane pre-uroporphyrinogen in several discrete steps. In Metallosphaera sedula (strain ATCC 51363 / DSM 5348 / JCM 9185 / NBRC 15509 / TH2), this protein is Probable porphobilinogen deaminase.